The following is a 376-amino-acid chain: Serpin B9 (376 aa).

M1 bears the N-acetylmethionine mark.

It belongs to the serpin family. Ov-serpin subfamily.

Its subcellular location is the cytoplasm. Its function is as follows. Granzyme B inhibitor. The sequence is that of Serpin B9 (SERPINB9) from Homo sapiens (Human).